The primary structure comprises 225 residues: UPF0173 metal-dependent hydrolase Tneu_1348 (225 aa).

Belongs to the UPF0173 family.

The sequence is that of UPF0173 metal-dependent hydrolase Tneu_1348 from Pyrobaculum neutrophilum (strain DSM 2338 / JCM 9278 / NBRC 100436 / V24Sta) (Thermoproteus neutrophilus).